The primary structure comprises 1147 residues: Nucleolar protein 6 (1147 aa).

The disordered stretch occupies residues 1 to 49 (MQKKRSRAGAAEQEAASDDGEMSDSSDKMEVSQNKGKSGIKRAPEADDV). Positions 15-24 (AASDDGEMSD) are enriched in acidic residues.

It belongs to the NRAP family. Part of the small subunit (SSU) processome, composed of more than 70 proteins and the RNA chaperone small nucleolar RNA (snoRNA) U3.

The protein localises to the nucleus. Its subcellular location is the nucleolus. The protein resides in the chromosome. Its function is as follows. Part of the small subunit (SSU) processome, first precursor of the small eukaryotic ribosomal subunit. During the assembly of the SSU processome in the nucleolus, many ribosome biogenesis factors, an RNA chaperone and ribosomal proteins associate with the nascent pre-rRNA and work in concert to generate RNA folding, modifications, rearrangements and cleavage as well as targeted degradation of pre-ribosomal RNA by the RNA exosome. In Xenopus laevis (African clawed frog), this protein is Nucleolar protein 6 (nol6).